The sequence spans 467 residues: Cysteine--tRNA ligase (467 aa).

Residue C30 participates in Zn(2+) binding. Residues P32–H42 carry the 'HIGH' region motif. Positions 209, 239, and 243 each coordinate Zn(2+). A 'KMSKS' region motif is present at residues K271 to S275. Position 274 (K274) interacts with ATP.

Belongs to the class-I aminoacyl-tRNA synthetase family. As to quaternary structure, monomer. Zn(2+) serves as cofactor.

It is found in the cytoplasm. The enzyme catalyses tRNA(Cys) + L-cysteine + ATP = L-cysteinyl-tRNA(Cys) + AMP + diphosphate. In Aliarcobacter butzleri (strain RM4018) (Arcobacter butzleri), this protein is Cysteine--tRNA ligase.